A 406-amino-acid polypeptide reads, in one-letter code: Alpha-1-antitrypsin (406 aa).

Residues 1–24 (MTSSISWGLLLLAGLCCLVPSFLA) form the signal peptide. Position 33 is a phosphoserine (Ser33). N-linked (GlcNAc...) asparagine glycosylation is found at Asn59, Asn96, and Asn260. The RCL stretch occupies residues 362-381 (GTTVLEAVPMSIPPDVCFKN). Ser372 bears the Phosphoserine mark.

Belongs to the serpin family. Interacts with CELA2A. Interacts with ERGIC3 and LMAN1/ERGIC53. Interacts with PRSS1/Trypsin. In terms of tissue distribution, plasma.

It localises to the secreted. Functionally, inhibitor of serine proteases. Can inhibit elastase, trypsin, chymotrypsin and plasmin. This chain is Alpha-1-antitrypsin, found in Meriones unguiculatus (Mongolian jird).